The primary structure comprises 470 residues: D-serine/D-alanine/glycine transporter (470 aa).

Helical transmembrane passes span 30-50, 51-71, 102-122, 128-148, 162-182, 211-231, 256-276, 283-303, 350-370, 371-391, 413-433, and 441-461; these read LIAI…KTIS, LAGP…FFVM, FTGW…VVAI, FWFP…LLLV, FWFA…GLVM, LSGF…IELV, IIMF…WSSV, FVEL…NFVV, FSCI…SVIG, AFTM…TIIL, PLGK…LVLL, and QALL…LFIG.

It belongs to the amino acid-polyamine-organocation (APC) superfamily. Amino acid transporter (AAT) (TC 2.A.3.1) family.

The protein resides in the cell inner membrane. The enzyme catalyses D-alanine(in) + H(+)(in) = D-alanine(out) + H(+)(out). It catalyses the reaction D-serine(out) + H(+)(out) = D-serine(in) + H(+)(in). The catalysed reaction is glycine(in) + H(+)(in) = glycine(out) + H(+)(out). It carries out the reaction D-cycloserine(in) + H(+)(in) = D-cycloserine(out) + H(+)(out). Uptake of D-serine is inhibited by D-alanine, D-cycloserine, glycine and at high concentrations of D-threonine. Its function is as follows. Permease that is involved in the transport across the cytoplasmic membrane of D-alanine, D-serine and glycine. Is the only transporter of D-alanine. Transports D-serine less efficiently than DsdX. In addition, in minimal media, transports the broad spectrum antibiotic D-cycloserine into the cell. Transports D-cycloserine only in minimal media, and not in a complex medium, suggesting that CycA does not play a role in D-cycloserine transport when E.coli is grown in a complex or biologically relevant medium, probably due to competition from other CycA substrates present in the medium. In Escherichia coli O6:H1 (strain CFT073 / ATCC 700928 / UPEC), this protein is D-serine/D-alanine/glycine transporter (cycA).